The sequence spans 646 residues: Long-chain fatty acid transport protein 1 (646 aa).

At 1–13 (MRAPGAGTASVAS) the chain is on the extracellular side. Residues 14-34 (LALLWFLGLPWTWSAAAAFCV) form a helical membrane-spanning segment. The Cytoplasmic segment spans residues 35 to 646 (YVGGGGWRFL…ARICAGDFSL (612 aa)). Residues 191 to 475 (EVSEQLGKSL…YVSDSATNKK (285 aa)) are sufficient for oligomerization. Residue 246–257 (YIYTSGTTGLPK) participates in AMP binding.

This sequence belongs to the ATP-dependent AMP-binding enzyme family. In terms of assembly, self-associates. May function as a homodimer. Interacts with EPRS1; mediates the translocation of SLC27A1 from the cytoplasm to the plasma membrane thereby increasing the uptake of long-chain fatty acids. Interacts with DGAT2 and this interaction is enhanced in the presence of ZFYVE1. As to expression, higher expression in white adipose tissue than in heart. Highest expression in skeletal muscle, heart and fat. Lower levels in brain, kidney, lung, liver and testis. No expression in spleen or intestine.

It is found in the cell membrane. It localises to the mitochondrion outer membrane. The protein resides in the endomembrane system. The protein localises to the cytoplasm. The catalysed reaction is a fatty acid(in) = a fatty acid(out). It catalyses the reaction (9Z)-octadecenoate(out) = (9Z)-octadecenoate(in). It carries out the reaction hexadecanoate(out) = hexadecanoate(in). The enzyme catalyses (5Z,8Z,11Z,14Z)-eicosatetraenoate(out) = (5Z,8Z,11Z,14Z)-eicosatetraenoate(in). The catalysed reaction is (9Z,12Z)-octadecadienoate(out) = (9Z,12Z)-octadecadienoate(in). It catalyses the reaction a long-chain fatty acid + ATP + CoA = a long-chain fatty acyl-CoA + AMP + diphosphate. It carries out the reaction (5Z,8Z,11Z,14Z)-eicosatetraenoate + ATP + CoA = (5Z,8Z,11Z,14Z)-eicosatetraenoyl-CoA + AMP + diphosphate. The enzyme catalyses a very long-chain fatty acid + ATP + CoA = a very long-chain fatty acyl-CoA + AMP + diphosphate. The catalysed reaction is tetracosanoate + ATP + CoA = tetracosanoyl-CoA + AMP + diphosphate. Inhibited by Triacsin C. Both insulin and muscle contraction stimulate translocation to the plasma membrane in muscle, increasing fatty acid transport activity. Functionally, mediates the import of long-chain fatty acids (LCFA) into the cell by facilitating their transport at the plasma membrane. Also functions as an acyl-CoA ligase catalyzing the ATP-dependent formation of fatty acyl-CoA using LCFA and very-long-chain fatty acids (VLCFA) as substrates, which prevents fatty acid efflux from cells and might drive more fatty acid uptake. May act directly as a bona fide transporter, or alternatively, in a cytoplasmic or membrane-associated multimeric protein complex to trap and draw fatty acids towards accumulation. Plays a pivotal role in regulating available LCFA substrates from exogenous sources in tissues undergoing high levels of beta-oxidation or triglyceride synthesis. May be involved in regulation of cholesterol metabolism. Probably involved in fatty acid transport across the blood barrier. The protein is Long-chain fatty acid transport protein 1 of Mus musculus (Mouse).